The primary structure comprises 332 residues: Ribosomal RNA small subunit methyltransferase H (332 aa).

S-adenosyl-L-methionine contacts are provided by residues 36-38 (GGY), D54, F81, D102, and Q109. The segment at 295 to 322 (PRARSAKLRGAERTESPAHAAGDLPGWP) is disordered.

It belongs to the methyltransferase superfamily. RsmH family.

The protein localises to the cytoplasm. The catalysed reaction is cytidine(1402) in 16S rRNA + S-adenosyl-L-methionine = N(4)-methylcytidine(1402) in 16S rRNA + S-adenosyl-L-homocysteine + H(+). Functionally, specifically methylates the N4 position of cytidine in position 1402 (C1402) of 16S rRNA. In Rhodopseudomonas palustris (strain ATCC BAA-98 / CGA009), this protein is Ribosomal RNA small subunit methyltransferase H.